We begin with the raw amino-acid sequence, 539 residues long: Protein PNS1 (539 aa).

A disordered region spans residues 1-38 (MPLNEKYERPPQPPPAYDPNHRPPSSSENSAAANVNDG). Topologically, residues 1-81 (MPLNEKYERP…NDNKPRWNDW (81 aa)) are cytoplasmic. Residues 25 to 36 (SSSENSAAANVN) show a composition bias toward low complexity. A helical membrane pass occupies residues 82–102 (PFTIFFLCTVGGFIAIAAITL). At 103-129 (RAWSQTYSSTGSGIYDGVNTGTLNTNA) the chain is on the extracellular side. A helical membrane pass occupies residues 130–150 (AILLVFVCIIALVFSVLGLTL). At 151–157 (CRIFPKQ) the chain is on the cytoplasmic side. A helical transmembrane segment spans residues 158–178 (FIYCGMVINLVASLGTAIMYM). Topologically, residues 179–182 (SLRY) are extracellular. Residues 183–203 (WSAGIVFLVFTFMTAWCYWGM) traverse the membrane as a helical segment. Residues 204–226 (RSRIPLSVAVLKVVVDAMKKCPQ) lie on the Cytoplasmic side of the membrane. A helical transmembrane segment spans residues 227 to 247 (IFFVSFVGALVASAFGFLFSA). Residues 248-274 (VIVATYIKYDPNSSNGGCDVSGGSCSH) lie on the Extracellular side of the membrane. Asn259 is a glycosylation site (N-linked (GlcNAc...) asparagine). A helical transmembrane segment spans residues 275 to 295 (SKLIGVLVVVFFCGYYISEVI). Over 296-332 (RNVIHCVISGVFGSWYYMSKSDQGMPRWPAFGALKRA) the chain is Cytoplasmic. The chain crosses the membrane as a helical span at residues 333-353 (MTYSFGSICFGSLLVALIDLL). Topologically, residues 354–371 (RQILQMIRHDVTSSGGGQ) are extracellular. The helical transmembrane segment at 372–392 (IAIQILFMVFDWIIGFLKWLA) threads the bilayer. Residues 393–436 (EYFNHYAYSFIALYGKPYLRAAKETWYMLREKGMDALINDNLIN) lie on the Cytoplasmic side of the membrane. Residues 437 to 457 (IALGLFSMFASYMTALFTFLY) traverse the membrane as a helical segment. Residues 458 to 473 (LRFTSPQYNSNGAYNG) lie on the Extracellular side of the membrane. The helical transmembrane segment at 474–494 (ALMAFSFVIALQICNIATEAI) threads the bilayer. At 495–539 (RSGTATFFVALGNDPEVFHHSYPHRFDEIFRAYPDVLRKLSHQNV) the chain is on the cytoplasmic side.

The protein belongs to the CTL (choline transporter-like) family.

The protein localises to the cell membrane. Its function is as follows. Probably involved in transport through the plasma membrane. This Saccharomyces cerevisiae (strain ATCC 204508 / S288c) (Baker's yeast) protein is Protein PNS1 (PNS1).